The primary structure comprises 213 residues: Na(+)-translocating NADH-quinone reductase subunit D (213 aa).

The next 6 helical transmembrane spans lie at 22 to 42 (LIAILGICSALAVTTTVTTAL), 43 to 63 (TMGFAVSFVTGCSSFVVSLLR), 77 to 97 (IIISLFVILIDQFLKAFFFTI), 101 to 121 (LSVFVGLIITNCIVMGRAESM), 131 to 151 (FLDGLGSGLGYGWVLVCISII), and 183 to 203 (LGLMVLAPSAFFLLGIMIWIV).

This sequence belongs to the NqrDE/RnfAE family. Composed of six subunits; NqrA, NqrB, NqrC, NqrD, NqrE and NqrF.

It localises to the cell inner membrane. The catalysed reaction is a ubiquinone + n Na(+)(in) + NADH + H(+) = a ubiquinol + n Na(+)(out) + NAD(+). NQR complex catalyzes the reduction of ubiquinone-1 to ubiquinol by two successive reactions, coupled with the transport of Na(+) ions from the cytoplasm to the periplasm. NqrA to NqrE are probably involved in the second step, the conversion of ubisemiquinone to ubiquinol. In Chlamydia trachomatis serovar A (strain ATCC VR-571B / DSM 19440 / HAR-13), this protein is Na(+)-translocating NADH-quinone reductase subunit D.